The following is a 1677-amino-acid chain: MAVADDTKADLLKVSILGKESIHCGFHLTPYIVQTVLTTLPSSTYVLITDDNIAKLHLNKFEEAFAKGIEKSAANPKPRFLSHVIPPGETSKSREGKARIEDFLLFHKCTRDSVILALGGGVIGDLVGFVAATFMRGVRFCQIPTTLLAMVDSSVGGKTAIDTPHGKNLIGAFWQPEYIFIDAAYLETLPTREFSNGMAEVVKTAAIWDEKEFTSLESRSAELFAAIQTPSTNYAGRTLETRSEAQKLLLSTIAASIGVKAHIVTIDERETGLRNLVNFGHSIGHAIEAVLTPTILHGECVSIGMILEAELSRQLGILTQVGVGRLTRCLKAYNLPTSLSAPLIASLPQASLLTVPRLLDIMRIDKKNSGTNKKIVLLKRIGETYEQKASIVEDKAIEKTLAEAVTVVPSIPTGNVKGSPGEVRMSTPGSKSISNRALVLAALAKGTCRLRNLLHSDDTQGAVFTWEDGGETLVVEGGEGTLTVPTPGKELYLGNAGTAARFLTTVCALAQPAPASVQPPSTNTVITGNARMKQRPIGPLVDALRANGCSIGYRESEGCLPLSIPPNSFKGGKIQLAASVSSQYVSSILLCAPYAQDANGVTLELVGGEVISQPYIDMTIAMMKTFGVEVTRRTDASGKLLDIYDIPRGTYVNPPVYNIESDASSATYPLAVAAITGTKCTIENIGSSSLQGDAKFAVEVLQKMGCEVHQTADETTVQGPPLGQLKAIEEVDMEVMTDAFLTASVLAAVANGGENKAMKITGIANQRVKECNRIRAMMDELAKFGVHTTEQELGLTIYAVPISQLKKNVSVHCYDDHRVAMAFSVLSTVVEGAIIEEKRCVEKTWPGWWDDLENKIGIKVEGVDLAGLRAESSSAGVKESKPIDNSSILLIGMRGTGKTHIGQLAAASLPGWSFVDADHYFESKLKTGVKDFVKNEGWEKFREEELAVLAELIGLGVDGKAVSSPSSYSKNHVISLGGGIVETPAARSLLKAYLAKGGRVVHITRPIDEIVRYLNVETARPAYEEPILDVWKRREPWYKECSGWEFGNVVVEAPQGQAQAANVEAGPGKTKCVKTLAGRNEVKRFFGHLAGINPNFTHGGSVEGQQRRTYFLCLTYPDVRHAFPYIDELTEGADALELRVDLLKDAKAPEAPFPSVAYVKDQVTALRRVTGLPIIYTVRTKAQGGAFPDGNAKEYKELVEAGVRLGVEYLDVEVASIFSDKEVADLSKRTKKAGSTLVIASWHDWSGKMQWDGEDVKRKYDEARKFGDLVKIVGKAEKLEDNFKLLSFVKSATSLPNSPPIIAINMSTLGQSSRILNTTFTPVSHPLLPTKAAPGQLSFKQIQQALHLLGLLPSKHFHLFGTPIAHSMSPTLHNTGFELLGLPFKYGLLESKEVDCKEVRDVISDKEGFGGASVTIPFKVDVIELLDELTESAKEIGAVNTIIPVHRSSINAQGQEETTRVLVGDNTDWVGIRVCITQRVSEGELRNENTSGLVIGAGGTARAAIYALQDLGVPVIYLFNRTKEKAEDLAKAFVGGADKKWNGQLVVLDKLGGGWGDVGVAPRVIVSTVPASATALPSASTAAIAGQVDKSTNQIVLPADVFAYTSGSAVVVDMAYKPAETPLLKLAKELKEEGNWACVQGLEVLLEQGYIQFEKWTGRRCPKEQVSTRVWEKYGEV.

Residues 1-394 (MAVADDTKAD…YEQKASIVED (394 aa)) form a 3-dehydroquinate synthase region. Residues 50–52 (DDN), 89–92 (ETSK), 120–122 (GGV), and D125 contribute to the NAD(+) site. R136 contributes to the 7-phospho-2-dehydro-3-deoxy-D-arabino-heptonate binding site. 145–146 (TT) contacts NAD(+). Positions 152 and 158 each coordinate 7-phospho-2-dehydro-3-deoxy-D-arabino-heptonate. An NAD(+)-binding site is contributed by K167. N168 is a 7-phospho-2-dehydro-3-deoxy-D-arabino-heptonate binding site. NAD(+) is bound by residues 185–188 (YLET) and N196. E200 contacts Zn(2+). 7-phospho-2-dehydro-3-deoxy-D-arabino-heptonate-binding positions include 200-203 (EVVK) and K260. E270 acts as the Proton acceptor; for 3-dehydroquinate synthase activity in catalysis. Residues 274–278 (RNLVN) and H281 each bind 7-phospho-2-dehydro-3-deoxy-D-arabino-heptonate. H281 contacts Zn(2+). The active-site Proton acceptor; for 3-dehydroquinate synthase activity is H285. 7-phospho-2-dehydro-3-deoxy-D-arabino-heptonate contacts are provided by H297 and K366. H297 is a binding site for Zn(2+). Positions 407 to 858 (VVPSIPTGNV…WDDLENKIGI (452 aa)) are EPSP synthase. C840 serves as the catalytic For EPSP synthase activity. A shikimate kinase region spans residues 885–1113 (NSSILLIGMR…GQQRRTYFLC (229 aa)). 892–899 (GMRGTGKT) is a binding site for ATP. Positions 1114–1341 (LTYPDVRHAF…AAPGQLSFKQ (228 aa)) are 3-dehydroquinase. H1243 acts as the Proton acceptor; for 3-dehydroquinate dehydratase activity in catalysis. The active-site Schiff-base intermediate with substrate; for 3-dehydroquinate dehydratase activity is the K1271. Positions 1354-1677 (SKHFHLFGTP…TRVWEKYGEV (324 aa)) are shikimate dehydrogenase.

This sequence in the N-terminal section; belongs to the sugar phosphate cyclases superfamily. Dehydroquinate synthase family. It in the 2nd section; belongs to the EPSP synthase family. The protein in the 3rd section; belongs to the shikimate kinase family. In the 4th section; belongs to the type-I 3-dehydroquinase family. This sequence in the C-terminal section; belongs to the shikimate dehydrogenase family. As to quaternary structure, homodimer. Requires Zn(2+) as cofactor.

The protein resides in the cytoplasm. The catalysed reaction is 7-phospho-2-dehydro-3-deoxy-D-arabino-heptonate = 3-dehydroquinate + phosphate. It carries out the reaction 3-dehydroquinate = 3-dehydroshikimate + H2O. It catalyses the reaction shikimate + NADP(+) = 3-dehydroshikimate + NADPH + H(+). The enzyme catalyses shikimate + ATP = 3-phosphoshikimate + ADP + H(+). The catalysed reaction is 3-phosphoshikimate + phosphoenolpyruvate = 5-O-(1-carboxyvinyl)-3-phosphoshikimate + phosphate. Its pathway is metabolic intermediate biosynthesis; chorismate biosynthesis; chorismate from D-erythrose 4-phosphate and phosphoenolpyruvate: step 2/7. The protein operates within metabolic intermediate biosynthesis; chorismate biosynthesis; chorismate from D-erythrose 4-phosphate and phosphoenolpyruvate: step 3/7. It functions in the pathway metabolic intermediate biosynthesis; chorismate biosynthesis; chorismate from D-erythrose 4-phosphate and phosphoenolpyruvate: step 4/7. It participates in metabolic intermediate biosynthesis; chorismate biosynthesis; chorismate from D-erythrose 4-phosphate and phosphoenolpyruvate: step 5/7. Its pathway is metabolic intermediate biosynthesis; chorismate biosynthesis; chorismate from D-erythrose 4-phosphate and phosphoenolpyruvate: step 6/7. Functionally, the AROM polypeptide catalyzes 5 consecutive enzymatic reactions in prechorismate polyaromatic amino acid biosynthesis. The chain is Pentafunctional AROM polypeptide from Coprinopsis cinerea (strain Okayama-7 / 130 / ATCC MYA-4618 / FGSC 9003) (Inky cap fungus).